The sequence spans 785 residues: Endonuclease MutS2 (785 aa).

ATP is bound at residue 335 to 342 (GPNTGGKT). One can recognise a Smr domain in the interval 710–785 (LDLRGERYED…GNGVTIVEFK (76 aa)).

The protein belongs to the DNA mismatch repair MutS family. MutS2 subfamily. Homodimer. Binds to stalled ribosomes, contacting rRNA.

Endonuclease that is involved in the suppression of homologous recombination and thus may have a key role in the control of bacterial genetic diversity. Its function is as follows. Acts as a ribosome collision sensor, splitting the ribosome into its 2 subunits. Detects stalled/collided 70S ribosomes which it binds and splits by an ATP-hydrolysis driven conformational change. Acts upstream of the ribosome quality control system (RQC), a ribosome-associated complex that mediates the extraction of incompletely synthesized nascent chains from stalled ribosomes and their subsequent degradation. Probably generates substrates for RQC. The sequence is that of Endonuclease MutS2 from Listeria monocytogenes serotype 4b (strain CLIP80459).